Consider the following 266-residue polypeptide: Diphthine synthase (266 aa).

S-adenosyl-L-methionine contacts are provided by residues Leu-9, Asp-85, Ile-88, 113–114, Leu-168, Ala-210, and His-235; that span reads TA.

Belongs to the diphthine synthase family. As to quaternary structure, homodimer.

The catalysed reaction is 2-[(3S)-amino-3-carboxypropyl]-L-histidyl-[translation elongation factor 2] + 3 S-adenosyl-L-methionine = diphthine-[translation elongation factor 2] + 3 S-adenosyl-L-homocysteine + 3 H(+). It functions in the pathway protein modification; peptidyl-diphthamide biosynthesis. Its function is as follows. S-adenosyl-L-methionine-dependent methyltransferase that catalyzes the trimethylation of the amino group of the modified target histidine residue in translation elongation factor 2 (EF-2), to form an intermediate called diphthine. The three successive methylation reactions represent the second step of diphthamide biosynthesis. This is Diphthine synthase from Natronomonas pharaonis (strain ATCC 35678 / DSM 2160 / CIP 103997 / JCM 8858 / NBRC 14720 / NCIMB 2260 / Gabara) (Halobacterium pharaonis).